The following is a 205-amino-acid chain: MGGTFDPIHHGHLVAASEVAAKFGLDEVVFVPTGQPWQKMSKKVSEPEHRYLMTVIATASNPRFTVSRVDVDRPGPTYTIDTLRDLRTQRPDADLFFITGADAMAQILSWKNIDELWSLAHFVGVTRPGHVLDGMGRKDVSLLEVPAMAISSTDCRTRVAAGNPVWYLVPDGVVQYIAKYGLYAGHADPGPSAALTELHEPASTE.

This sequence belongs to the NadD family.

It carries out the reaction nicotinate beta-D-ribonucleotide + ATP + H(+) = deamido-NAD(+) + diphosphate. It functions in the pathway cofactor biosynthesis; NAD(+) biosynthesis; deamido-NAD(+) from nicotinate D-ribonucleotide: step 1/1. Catalyzes the reversible adenylation of nicotinate mononucleotide (NaMN) to nicotinic acid adenine dinucleotide (NaAD). The polypeptide is Probable nicotinate-nucleotide adenylyltransferase (Arthrobacter sp. (strain FB24)).